We begin with the raw amino-acid sequence, 643 residues long: uncharacterized protein (643 aa).

The disordered stretch occupies residues 561 to 643 (LNQELETSSE…GADRKKRGVY (83 aa)). Residues 591 to 606 (SRGGRGGRGARGGNRG) show a composition bias toward gly residues. Positions 617–635 (GHDRQMKEKHKSDIKQRGA) are enriched in basic and acidic residues.

This is an uncharacterized protein from Caenorhabditis elegans.